The chain runs to 351 residues: Phosphoribosylformylglycinamidine cyclo-ligase (351 aa).

Belongs to the AIR synthase family.

Its subcellular location is the cytoplasm. The catalysed reaction is 2-formamido-N(1)-(5-O-phospho-beta-D-ribosyl)acetamidine + ATP = 5-amino-1-(5-phospho-beta-D-ribosyl)imidazole + ADP + phosphate + H(+). The protein operates within purine metabolism; IMP biosynthesis via de novo pathway; 5-amino-1-(5-phospho-D-ribosyl)imidazole from N(2)-formyl-N(1)-(5-phospho-D-ribosyl)glycinamide: step 2/2. The polypeptide is Phosphoribosylformylglycinamidine cyclo-ligase (Azotobacter vinelandii (strain DJ / ATCC BAA-1303)).